Reading from the N-terminus, the 429-residue chain is Serine--tRNA ligase (429 aa).

L-serine is bound at residue 235–237 (TAE). 266 to 268 (RSE) provides a ligand contact to ATP. Glutamate 289 serves as a coordination point for L-serine. Residue 353–356 (EISS) coordinates ATP. An L-serine-binding site is contributed by serine 389.

This sequence belongs to the class-II aminoacyl-tRNA synthetase family. Type-1 seryl-tRNA synthetase subfamily. As to quaternary structure, homodimer. The tRNA molecule binds across the dimer.

It is found in the cytoplasm. The catalysed reaction is tRNA(Ser) + L-serine + ATP = L-seryl-tRNA(Ser) + AMP + diphosphate + H(+). The enzyme catalyses tRNA(Sec) + L-serine + ATP = L-seryl-tRNA(Sec) + AMP + diphosphate + H(+). Its pathway is aminoacyl-tRNA biosynthesis; selenocysteinyl-tRNA(Sec) biosynthesis; L-seryl-tRNA(Sec) from L-serine and tRNA(Sec): step 1/1. Catalyzes the attachment of serine to tRNA(Ser). Is also able to aminoacylate tRNA(Sec) with serine, to form the misacylated tRNA L-seryl-tRNA(Sec), which will be further converted into selenocysteinyl-tRNA(Sec). The sequence is that of Serine--tRNA ligase from Histophilus somni (strain 129Pt) (Haemophilus somnus).